Reading from the N-terminus, the 377-residue chain is Adenosine 3'-phospho 5'-phosphosulfate transporter 2 (377 aa).

Transmembrane regions (helical) follow at residues 50-70, 77-97, 115-135, 138-158, 164-184, 195-215, 228-248, 266-286, 293-313, and 317-337; these read LCCGGVFALYLVYGYMQELIF, PYGWYLTLVQFAYYTAFGYIE, ALLAFLTLGTMGLSNSSVGYL, PTQVIFKCCKLIPVLIGSVLI, GPMDFFAATAMCLGLILFTLA, FGVFLISLALLCDAAIGNVQE, VVIYSYGIGFVYLAVIMLLSG, GYAFLFSLTGYLGIQIVLTLV, LAATVTTARKAVTIALSFVFF, and FTIQYLWSGLIVVFGIYLNVY.

The protein belongs to the nucleotide-sugar transporter family. SLC35B subfamily.

It is found in the golgi apparatus membrane. Mediates the transport of adenosine 3'-phospho 5'-phosphosulfate (PAPS), from cytosol into Golgi. PAPS is a universal sulfuryl donor for sulfation events that take place in the Golgi. Essential for viability. Involved in glycosaminoglycan synthesis and the subsequent signaling. May be involved in hh and dpp signaling by controlling the sulfation of heparan sulfate (HS). This chain is Adenosine 3'-phospho 5'-phosphosulfate transporter 2, found in Anopheles gambiae (African malaria mosquito).